The chain runs to 219 residues: Octanoyltransferase (219 aa).

Positions 32 to 207 (ASSPDQLWIV…TFSHNLGYQN (176 aa)) constitute a BPL/LPL catalytic domain. Substrate is bound by residues 71 to 78 (RGGQVTYH), 138 to 140 (SLG), and 151 to 153 (GLA). Cys-169 serves as the catalytic Acyl-thioester intermediate.

It belongs to the LipB family.

The protein resides in the cytoplasm. The catalysed reaction is octanoyl-[ACP] + L-lysyl-[protein] = N(6)-octanoyl-L-lysyl-[protein] + holo-[ACP] + H(+). The protein operates within protein modification; protein lipoylation via endogenous pathway; protein N(6)-(lipoyl)lysine from octanoyl-[acyl-carrier-protein]: step 1/2. In terms of biological role, catalyzes the transfer of endogenously produced octanoic acid from octanoyl-acyl-carrier-protein onto the lipoyl domains of lipoate-dependent enzymes. Lipoyl-ACP can also act as a substrate although octanoyl-ACP is likely to be the physiological substrate. This Shewanella sediminis (strain HAW-EB3) protein is Octanoyltransferase.